A 359-amino-acid polypeptide reads, in one-letter code: Phosphate acyltransferase (359 aa).

The protein belongs to the PlsX family. As to quaternary structure, homodimer. Probably interacts with PlsY.

It localises to the cytoplasm. It catalyses the reaction a fatty acyl-[ACP] + phosphate = an acyl phosphate + holo-[ACP]. It functions in the pathway lipid metabolism; phospholipid metabolism. Its function is as follows. Catalyzes the reversible formation of acyl-phosphate (acyl-PO(4)) from acyl-[acyl-carrier-protein] (acyl-ACP). This enzyme utilizes acyl-ACP as fatty acyl donor, but not acyl-CoA. In Koribacter versatilis (strain Ellin345), this protein is Phosphate acyltransferase.